The primary structure comprises 134 residues: MTNIRKTHPLLKIINSSFVDLPAPSSLSSWWNFGSLLGVCLAVQILTGLFLAMHYTSDTATAFNSVTHICRDVNYGWLLRYLHANGASMFFICLYLHVGRGLYYGSYTYSETWNVGILLLFAVMATAFMGYVLP.

The next 3 helical transmembrane spans lie at 33 to 53, 77 to 98, and 113 to 133; these read FGSL…FLAM, WLLR…YLHV, and WNVG…GYVL. 2 residues coordinate heme b: histidine 83 and histidine 97.

Belongs to the cytochrome b family. As to quaternary structure, the cytochrome bc1 complex contains 11 subunits: 3 respiratory subunits (MT-CYB, CYC1 and UQCRFS1), 2 core proteins (UQCRC1 and UQCRC2) and 6 low-molecular weight proteins (UQCRH/QCR6, UQCRB/QCR7, UQCRQ/QCR8, UQCR10/QCR9, UQCR11/QCR10 and a cleavage product of UQCRFS1). This cytochrome bc1 complex then forms a dimer. It depends on heme b as a cofactor.

Its subcellular location is the mitochondrion inner membrane. In terms of biological role, component of the ubiquinol-cytochrome c reductase complex (complex III or cytochrome b-c1 complex) that is part of the mitochondrial respiratory chain. The b-c1 complex mediates electron transfer from ubiquinol to cytochrome c. Contributes to the generation of a proton gradient across the mitochondrial membrane that is then used for ATP synthesis. This is Cytochrome b (MT-CYB) from Chiroderma trinitatum (Little big-eyed bat).